The following is a 599-amino-acid chain: Dehydrogenase eriK (599 aa).

A signal peptide spans 1–20 (MAFLKARLAALLSVAVSCSA). FAD is bound by residues 43–44 (TA) and 64–65 (EG). A glycan (N-linked (GlcNAc...) asparagine) is linked at asparagine 93. An FAD-binding site is contributed by 122–125 (NGMY). N-linked (GlcNAc...) asparagine glycosylation is found at asparagine 169, asparagine 191, asparagine 234, asparagine 260, asparagine 284, asparagine 319, asparagine 339, asparagine 353, asparagine 365, asparagine 370, asparagine 398, asparagine 456, and asparagine 518. FAD contacts are provided by residues alanine 569 and 580–581 (TQ).

It belongs to the GMC oxidoreductase family. As to quaternary structure, homodimer. The cofactor is FAD.

Its function is as follows. Dehydrogenase; part of the gene cluster that mediates the biosynthesis of erinacines, cyathane-xylosides that show unique biological activities, including leishmanicidal activity, stimulating activity for nerve growth-factor synthesis, and agonistic activity toward the kappa opioid receptor. The role of the dehydrogenase eriK within the pathway has still to be determined. The first step of the erinacines biosynthesis pathway is catalyzed by the geranylgeranyl diphosphate (GGPP) synthase eriE via conversion of farnesyl pyrophosphate and isopentyl pyrophosphate into geranylgeranyl pyrophosphate (GGPP). GGPP is then substrate of the diterpene cyclase eriG for the production of cyatha-3,12-diene. The cytochrome P450 monooxygenase eriI then hydroxylates cyatha-3,12-diene at C-14 of the seven-membered ring to produce erinacol, which is further hydroxylated at C-15 by the cytochrome P450 monooxygenase eriC to yield cyathadiol. The cytochrome P450 monooxygenase eriA then catalyzes C-11 hydroxylation in the presence of the short chain dehydrogenase/reductase (SDR) eriH, which leads to the production of cyathatriol. The acetyltransferase eriL converts cyathatriol into 11-O-acetyl-cyathatriol. The SDR eriH catalyzes further oxidation of 11-O-acetyl-cyathatriol into 1-O-acetylcyathin A3. Finally, the glycosyl transferase eriJ tranfers xylose from UDP-xylose onto C-14 of 11-O-acetyl-cyathatriol to form eracine Q. EriJ is also able to convert 11-O-acetyl-cyathatriol to eracine Q2 by using UDP-D-glucose as cosubstrate, but at a lower rate. The protein is Dehydrogenase eriK of Hericium erinaceus (Lion's mane mushroom).